An 896-amino-acid polypeptide reads, in one-letter code: Androgen receptor (896 aa).

Positions 1 to 534 (MEVQLGLGRV…PIDYYFPPQK (534 aa)) are modulating. The interaction with ZNF318 stretch occupies residues 1–563 (MEVQLGLGRV…GSCKVFFKRA (563 aa)). Disordered stretches follow at residues 35–152 (QNPG…LSLL) and 178–218 (LLQQ…YLGG). Residues 54–78 (LQQQQLQQQETSPRRQQQQQQQPSE) are compositionally biased toward low complexity. Phosphoserine; by CDK9 is present on Ser-65. Residue Ser-81 is modified to Phosphoserine. Low complexity predominate over residues 178–189 (LLQQQQQQQQQQ). Residues 190–199 (EAVSEGNSSG) are compositionally biased toward polar residues. Tyr-215 is modified (phosphotyrosine; by CSK). Position 248 is a phosphoserine (Ser-248). Tyr-259 carries the post-translational modification Phosphotyrosine; by CSK and TNK2. A phosphotyrosine; by CSK mark is found at Tyr-299, Tyr-338, Tyr-349, and Tyr-354. The residue at position 355 (Tyr-355) is a Phosphotyrosine; by CSK and TNK2. Lys-378 is covalently cross-linked (Glycyl lysine isopeptide (Lys-Gly) (interchain with G-Cter in SUMO)). Tyr-385 carries the phosphotyrosine; by CSK modification. Residue Lys-497 forms a Glycyl lysine isopeptide (Lys-Gly) (interchain with G-Cter in SUMO) linkage. Phosphotyrosine; by CSK is present on residues Tyr-511 and Tyr-528. An interaction with LPXN region spans residues 528-895 (YYFPPQKTCL…GKVKPIYFHT (368 aa)). Positions 535 to 608 (TCLICGDEAS…AGMTLGARKL (74 aa)) form a DNA-binding region, nuclear receptor. NR C4-type zinc fingers lie at residues 536–556 (CLIC…CGSC) and 572–596 (CASR…LRKC). Residues 548–638 (YGALTCGSCK…TEEPAQKLTV (91 aa)) are interaction with HIPK3. The interaction with CCAR1 stretch occupies residues 568–895 (QKYLCASRND…GKVKPIYFHT (328 aa)). Residues 601–895 (MTLGARKLKK…GKVKPIYFHT (295 aa)) form an interaction with KAT7 region. Ser-627 is modified (phosphoserine; by STK4/MST1). The region spanning 645–876 (ECQPIFLNVL…DFPEMMAEII (232 aa)) is the NR LBD domain. 2 residues coordinate 17beta-hydroxy-5alpha-androstan-3-one: Asn-682 and Arg-729. Residues Lys-822 and Lys-824 each participate in a glycyl lysine isopeptide (Lys-Gly) (interchain with G-Cter in ubiquitin) cross-link. Residue Thr-854 coordinates 17beta-hydroxy-5alpha-androstan-3-one. Tyr-892 is subject to Phosphotyrosine; by CSK.

It belongs to the nuclear hormone receptor family. NR3 subfamily. As to quaternary structure, binds DNA as a homodimer. Part of a ternary complex containing AR, EFCAB6/DJBP and PARK7. Interacts with HIPK3 and NR0B2 in the presence of androgen. The ligand binding domain interacts with KAT7/HBO1 in the presence of dihydrotestosterone. Interacts with EFCAB6/DJBP, PQBP1, RANBP9, RBAK, SPDEF, SRA1, TGFB1I1 and RREB1. Interacts with ZMIZ1/ZIMP10 and ZMIZ2/ZMIP7 which both enhance its transactivation activity. Interacts with SLC30A9 and RAD54L2/ARIP4. Interacts with MACROD1 (via macro domain). Interacts via the ligand-binding domain with LXXLL and FXXLF motifs from NCOA1, NCOA2, NCOA3 and MAGEA11. Interacts (via nuclear receptor DNA binding domain and nuclear receptor ligand binding domain) with NCOA4. The AR N-terminal poly-Gln region binds Ran resulting in enhancement of AR-mediated transactivation. Ran-binding decreases as the poly-Gln length increases. Interacts with HIP1 (via coiled coil domain). Interacts (via ligand-binding domain) with TRIM68. Interacts with TNK2. Interacts with USP26. Interacts with RNF6. Interacts (regulated by RNF6 probably through polyubiquitination) with RNF14; regulates AR transcriptional activity. Interacts with PRMT2 and TRIM24. Interacts with RACK1. Interacts with RANBP10; this interaction enhances dihydrotestosterone-induced AR transcriptional activity. Interacts with PRPF6 in a hormone-independent way; this interaction enhances dihydrotestosterone-induced AR transcriptional activity. Interacts with STK4/MST1. Interacts with ZIPK/DAPK3. Interacts with LPXN. Interacts with MAK. Part of a complex containing AR, MAK and NCOA3. Interacts with CRY1. Interacts with CCAR1 and GATA2. Interacts with ZNF318. Interacts with BUD31. Interacts with ARID4A. Interacts with ARID4B. Interacts (via NR LBD domain) with ZBTB7A; the interaction is direct and androgen-dependent. Interacts with NCOR1. Interacts with NCOR2. Interacts with CRY2 in a ligand-dependent manner. Phosphorylated in prostate cancer cells in response to several growth factors including EGF. Phosphorylation is induced by c-Src kinase (CSK). Tyr-511 is one of the major phosphorylation sites and an increase in phosphorylation and Src kinase activity is associated with prostate cancer progression. Phosphorylation by TNK2 enhances the DNA-binding and transcriptional activity. Phosphorylation at Ser-65 by CDK9 regulates AR promoter selectivity and cell growth. Post-translationally, sumoylated on Lys-378 (major) and Lys-497. Ubiquitinated. Deubiquitinated by USP26. 'Lys-6' and 'Lys-27'-linked polyubiquitination by RNF6 modulates AR transcriptional activity and specificity. In terms of processing, palmitoylated by ZDHHC7 and ZDHHC21. Palmitoylation is required for plasma membrane targeting and for rapid intracellular signaling via ERK and AKT kinases and cAMP generation.

The protein resides in the nucleus. It is found in the cytoplasm. Steroid hormone receptors are ligand-activated transcription factors that regulate eukaryotic gene expression and affect cellular proliferation and differentiation in target tissues. Transcription factor activity is modulated by bound coactivator and corepressor proteins like ZBTB7A that recruits NCOR1 and NCOR2 to the androgen response elements/ARE on target genes, negatively regulating androgen receptor signaling and androgen-induced cell proliferation. Transcription activation is also down-regulated by NR0B2. Activated, but not phosphorylated, by HIPK3 and ZIPK/DAPK3. The protein is Androgen receptor (AR) of Sus scrofa (Pig).